A 230-amino-acid polypeptide reads, in one-letter code: Small ribosomal subunit protein uS3 (230 aa).

Positions 39-107 (VRKFLVEKLQ…PAQINIAEIR (69 aa)) constitute a KH type-2 domain.

This sequence belongs to the universal ribosomal protein uS3 family. In terms of assembly, part of the 30S ribosomal subunit. Forms a tight complex with proteins S10 and S14.

Its function is as follows. Binds the lower part of the 30S subunit head. Binds mRNA in the 70S ribosome, positioning it for translation. The protein is Small ribosomal subunit protein uS3 of Shewanella baltica (strain OS223).